We begin with the raw amino-acid sequence, 435 residues long: Mitogen-activated protein kinase HOG1 (435 aa).

Thr-2 is subject to N-acetylthreonine. Residues 23–302 enclose the Protein kinase domain; the sequence is YNDLNPVGMG…AADALAHPYS (280 aa). ATP is bound by residues 29 to 37 and Lys-52; that span reads VGMGAFGLV. The active-site Proton acceptor is Asp-144. Arsenite is bound by residues Cys-156 and Cys-161. Phosphothreonine; by PBS2 is present on Thr-174. The short motif at 174–176 is the TXY element; it reads TGY. Tyr-176 carries the post-translational modification Phosphotyrosine; by PBS2. Cys-205 provides a ligand contact to arsenite.

The protein belongs to the protein kinase superfamily. Ser/Thr protein kinase family. MAP kinase subfamily. HOG1 sub-subfamily. As to quaternary structure, interacts with CDC37, HOT1, KIN28, PTP2, PTP3, RBP1, RCK2, RPD3, SIC1, SMP1 and SIN4. Mg(2+) serves as cofactor. Post-translationally, activated by PBS2-mediated concomitant phosphorylation at Thr-174 and Tyr-176. Dually phosphorylated on Thr-174 and Tyr-176, which activates the enzyme.

Its subcellular location is the cytoplasm. The protein resides in the nucleus. The enzyme catalyses L-seryl-[protein] + ATP = O-phospho-L-seryl-[protein] + ADP + H(+). The catalysed reaction is L-threonyl-[protein] + ATP = O-phospho-L-threonyl-[protein] + ADP + H(+). With respect to regulation, activated by tyrosine and threonine phosphorylation. Inactivated by dephosphorylation via recruitment of PTC1 to the PBS2-HOG1 complex after adaptation to osmotic stress. PTP2 and PTP3 inactivate HOG1 by dephosphorylating Tyr-176, while the PP2Cs PTC1 and PTC2 or PTC3 dephosphorylate Thr-174 in the activation loop. In terms of biological role, proline-directed serine/threonine-protein kinase involved in a signal transduction pathway that is activated by changes in the osmolarity of the extracellular environment. Controls osmotic regulation of transcription via the stress response element (STRE) in promoters of target genes. Upon osmotic shock, associates with the SKO1-SSN6-TUP1 complex, phosphorylates SKO1, and converts it into an activator that subsequently recruits Swi/Snf and SAGA complexes. Activates the SMP1 transcription factor and the RCK2 kinase, both also involved in the regulation of the expression of a subset of osmotic stress-related genes. Phosphorylation of HSL1 by HOG1 leads to a G2 arrest essential for cell survival at high osmolarity. Also mediates cell-cycle arrest in G1 phase by the dual targeting of SIC1. Phosphorylates methyltransferase DOT1 at least on 'Ser-565' and 'Thr-576'. Regulates MFA2 ARE-mediated translation in response to carbon source. Targets RPD3 histone deacetylase to osmoresponsive promoters to induce gene expression on stress. Required for the Golgi apparatus localization of MNN1. Plays an essential role in maintaining water homeostasis, arsenite detoxification, copper-resistance, cold-resistance, hydrogen peroxide response, adaptation to citric acid stress, and repression of the mating pathway activity. Functions as an arsenic sensor and effector via direct binding to arsenic and subsequent phosphorylation of the ARR1 transcription factor. This chain is Mitogen-activated protein kinase HOG1 (HOG1), found in Saccharomyces cerevisiae (strain ATCC 204508 / S288c) (Baker's yeast).